The sequence spans 1024 residues: Gamma-tubulin complex component 5 (1024 aa).

Disordered stretches follow at residues 153 to 203, 523 to 545, and 853 to 873; these read IGLG…GGPQ, NEDKVSDSASASSGSDQGPSSRQ, and SQAKEDIPRDQDTPSQFGPPK. Over residues 189 to 198 the composition is skewed to basic and acidic residues; that stretch reads TPLEEQDHNR. Low complexity predominate over residues 529-543; it reads DSASASSGSDQGPSS. Basic and acidic residues predominate over residues 853–864; the sequence is SQAKEDIPRDQD.

It belongs to the TUBGCP family. Component of the gamma-tubulin ring complex (gTuRC) consisting of TUBGCP2, TUBGCP3, TUBGCP4, TUBGCP5 and TUBGCP6 and gamma-tubulin TUBG1 or TUBG2. TUBGCP2, TUBGCP3, TUBGCP4, TUBGCP5 and TUBGCP6 assemble in a 5:5:2:1:1 stoichiometry; each is associated with a gamma-tubulin, thereby arranging 14 gamma-tubulins in a helical manner. Gamma-tubulin at the first position is blocked by TUBGCP3 at the last position, allowing 13 protafilaments to grow into a microtubule. The gTuRC (via TUBGCP3 and TUBGCP6) interacts with ACTB and MZT1; the interactions form a luminal bridge that stabilizes the initial structure during complex assembly. The gTuRC (via TUBGCP2) interacts with MZT2A/MZT2B and CDK5RAP2 (via CM1 motif); the interactions play a role in gTuRC activation.

The protein localises to the cytoplasm. The protein resides in the cytoskeleton. It localises to the microtubule organizing center. It is found in the centrosome. In terms of biological role, component of the gamma-tubulin ring complex (gTuRC) which mediates microtubule nucleation. The gTuRC regulates the minus-end nucleation of alpha-beta tubulin heterodimers that grow into microtubule protafilaments, a critical step in centrosome duplication and spindle formation. This chain is Gamma-tubulin complex component 5 (Tubgcp5), found in Mus musculus (Mouse).